The sequence spans 495 residues: D-hydantoinase/dihydropyrimidinase (495 aa).

Residues H59, H61, and K150 each coordinate Zn(2+). Residue K150 is modified to N6-carboxylysine. Position 155 (Y155) interacts with substrate. Residues H183 and H239 each contribute to the Zn(2+) site. Residue S289 participates in substrate binding. A Zn(2+)-binding site is contributed by D316. N337 lines the substrate pocket.

The protein belongs to the metallo-dependent hydrolases superfamily. Hydantoinase/dihydropyrimidinase family. As to quaternary structure, homotetramer. The cofactor is Zn(2+). In terms of processing, carboxylation allows a single lysine to coordinate two zinc ions.

It catalyses the reaction 5,6-dihydrouracil + H2O = 3-(carbamoylamino)propanoate + H(+). Functionally, catalyzes the hydrolysis of dihydropyrimidines and of the structurally related DL-5-mono-substituted hydantoins, to produce N-carbamoyl-D-amino acids. The chain is D-hydantoinase/dihydropyrimidinase from Pseudomonas putida (Arthrobacter siderocapsulatus).